The primary structure comprises 439 residues: Histidinol dehydrogenase (439 aa).

NAD(+)-binding residues include Tyr-129, Gln-193, and Asn-222. Substrate is bound by residues Thr-245, Gln-267, and His-270. Positions 267 and 270 each coordinate Zn(2+). Residues Glu-336 and His-337 each act as proton acceptor in the active site. Substrate-binding residues include His-337, Asp-370, Glu-424, and His-429. Asp-370 provides a ligand contact to Zn(2+). His-429 is a binding site for Zn(2+).

The protein belongs to the histidinol dehydrogenase family. Zn(2+) is required as a cofactor.

It carries out the reaction L-histidinol + 2 NAD(+) + H2O = L-histidine + 2 NADH + 3 H(+). Its pathway is amino-acid biosynthesis; L-histidine biosynthesis; L-histidine from 5-phospho-alpha-D-ribose 1-diphosphate: step 9/9. Its function is as follows. Catalyzes the sequential NAD-dependent oxidations of L-histidinol to L-histidinaldehyde and then to L-histidine. The sequence is that of Histidinol dehydrogenase from Cutibacterium acnes (strain DSM 16379 / KPA171202) (Propionibacterium acnes).